The primary structure comprises 212 residues: Endoplasmic reticulum vesicle protein 25 (212 aa).

Residues 1-21 form the signal peptide; the sequence is MKSFAACVLLLCALFFEQVFA. The Lumenal portion of the chain corresponds to 22–181; it reads VRFDIPASTK…TNESTNRRVR (160 aa). A GOLD domain is found at 34–122; the sequence is QVCIRDFVSE…SRSIELDIES (89 aa). A helical transmembrane segment spans residues 182-202; the sequence is NFSIAVIVVLVALGAWQVNYM. Over 203-212 the chain is Cytoplasmic; sequence KNFFRAKHII.

The protein belongs to the EMP24/GP25L family.

It localises to the endoplasmic reticulum membrane. Its subcellular location is the golgi apparatus membrane. In terms of biological role, constituent of COPII-coated endoplasmic reticulum-derived transport vesicles. Required for efficient transport of a subset of secretory proteins to the Golgi. Facilitates retrograde transport from the Golgi to the endoplasmic reticulum. The protein is Endoplasmic reticulum vesicle protein 25 (ERV25) of Kluyveromyces lactis (strain ATCC 8585 / CBS 2359 / DSM 70799 / NBRC 1267 / NRRL Y-1140 / WM37) (Yeast).